A 144-amino-acid polypeptide reads, in one-letter code: Large ribosomal subunit protein uL11 (144 aa).

The protein belongs to the universal ribosomal protein uL11 family. Part of the ribosomal stalk of the 50S ribosomal subunit. Interacts with L10 and the large rRNA to form the base of the stalk. L10 forms an elongated spine to which L12 dimers bind in a sequential fashion forming a multimeric L10(L12)X complex. Post-translationally, one or more lysine residues are methylated.

Functionally, forms part of the ribosomal stalk which helps the ribosome interact with GTP-bound translation factors. The polypeptide is Large ribosomal subunit protein uL11 (Polaromonas sp. (strain JS666 / ATCC BAA-500)).